A 265-amino-acid chain; its full sequence is Tryptophan synthase alpha chain (265 aa).

Residues Glu41 and Asp52 each act as proton acceptor in the active site.

Belongs to the TrpA family. In terms of assembly, tetramer of two alpha and two beta chains.

The catalysed reaction is (1S,2R)-1-C-(indol-3-yl)glycerol 3-phosphate + L-serine = D-glyceraldehyde 3-phosphate + L-tryptophan + H2O. It functions in the pathway amino-acid biosynthesis; L-tryptophan biosynthesis; L-tryptophan from chorismate: step 5/5. Functionally, the alpha subunit is responsible for the aldol cleavage of indoleglycerol phosphate to indole and glyceraldehyde 3-phosphate. The protein is Tryptophan synthase alpha chain of Bacillus velezensis (strain DSM 23117 / BGSC 10A6 / LMG 26770 / FZB42) (Bacillus amyloliquefaciens subsp. plantarum).